We begin with the raw amino-acid sequence, 368 residues long: Homoserine O-acetyltransferase (368 aa).

The region spanning 44–350 (NAILVAHAWT…AYGHDAFLLE (307 aa)) is the AB hydrolase-1 domain. The Nucleophile role is filled by serine 150. Substrate is bound at residue arginine 217. Catalysis depends on residues aspartate 311 and histidine 344. Aspartate 345 is a binding site for substrate.

The protein belongs to the AB hydrolase superfamily. MetX family. In terms of assembly, homodimer.

The protein localises to the cytoplasm. It catalyses the reaction L-homoserine + acetyl-CoA = O-acetyl-L-homoserine + CoA. The protein operates within amino-acid biosynthesis; L-methionine biosynthesis via de novo pathway; O-acetyl-L-homoserine from L-homoserine: step 1/1. Functionally, transfers an acetyl group from acetyl-CoA to L-homoserine, forming acetyl-L-homoserine. The polypeptide is Homoserine O-acetyltransferase (Geobacter sulfurreducens (strain ATCC 51573 / DSM 12127 / PCA)).